Here is a 322-residue protein sequence, read N- to C-terminus: Adenine deaminase (322 aa).

Positions 11, 13, and 189 each coordinate Zn(2+). The active-site Proton donor is Glu-192. Residue Asp-270 coordinates Zn(2+). Residue Asp-271 participates in substrate binding.

It belongs to the metallo-dependent hydrolases superfamily. Adenosine and AMP deaminases family. Adenine deaminase type 2 subfamily. Requires Zn(2+) as cofactor.

The catalysed reaction is adenine + H2O + H(+) = hypoxanthine + NH4(+). Its function is as follows. Catalyzes the hydrolytic deamination of adenine to hypoxanthine. Plays an important role in the purine salvage pathway and in nitrogen catabolism. This chain is Adenine deaminase, found in Rhizobium rhizogenes (strain K84 / ATCC BAA-868) (Agrobacterium radiobacter).